The sequence spans 510 residues: Sphingolipid C9-methyltransferase B (510 aa).

Residue N55 is glycosylated (N-linked (GlcNAc...) asparagine). The next 2 helical transmembrane spans lie at 62-82 and 84-104; these read LLGG…GGGA and TFVF…WTYA. N-linked (GlcNAc...) asparagine glycosylation occurs at N175. Residues 227-228, 264-272, 290-295, and 320-321 contribute to the S-adenosyl-L-methionine site; these read YT, MLDIGCGWG, TIAENQ, and YR. The N-linked (GlcNAc...) asparagine glycan is linked to N294.

This sequence belongs to the CFA/CMAS family.

It localises to the membrane. The enzyme catalyses a (4E,8E)-4-sphinga-4,8-dienine ceramide + S-adenosyl-L-methionine = a 9-methyl-(4E,8E)-sphinga-4,8-dienine ceramide + S-adenosyl-L-homocysteine + H(+). The protein operates within lipid metabolism; sphingolipid metabolism. In terms of biological role, catalyzes methylation of the sphingoid base component of glucosylceramides (GluCers) at the C9-position. Sphingolipid C9-methylation requires 4,8-desaturated ceramides as substrates. Glucosylceramides play important roles in growth, differentiation and pathogenicity. The methyl group at the C9-position distinguishes fungal glucosylceramides from those of plants and animals and may thus play a role in host-pathogen interactions enabling the host to recognize the fungal attack and initiate specific defense responses. This Emericella nidulans (strain FGSC A4 / ATCC 38163 / CBS 112.46 / NRRL 194 / M139) (Aspergillus nidulans) protein is Sphingolipid C9-methyltransferase B.